The following is a 284-amino-acid chain: NAD kinase (284 aa).

Catalysis depends on aspartate 70, which acts as the Proton acceptor. NAD(+) is bound by residues aspartate 70 to glycine 71, asparagine 139 to glutamate 140, lysine 167, aspartate 169, leucine 177, threonine 180 to serine 185, and glutamine 236.

The protein belongs to the NAD kinase family. The cofactor is a divalent metal cation.

It localises to the cytoplasm. The enzyme catalyses NAD(+) + ATP = ADP + NADP(+) + H(+). Involved in the regulation of the intracellular balance of NAD and NADP, and is a key enzyme in the biosynthesis of NADP. Catalyzes specifically the phosphorylation on 2'-hydroxyl of the adenosine moiety of NAD to yield NADP. This is NAD kinase from Helicobacter pylori (strain G27).